The chain runs to 495 residues: MVYENPDGIRIGLEIHVQLNKLKTKMFCGCSTDYHNAAPNTHTCPVCLGLPGALPVLNKKAVEAAIKVGLALEGEIAEETQFHRKNYFYPDLPKGFQVTQYDYPIVSKGKVVIEGEDGEHVVGITRAHMEEDPGKLVHIGSIEKSKGVLIDYNRSGMPLIETVTEPDMRSPKEARRFLDKFRNILEYLDVFDGNLEGAMRVDANVSVHWGTRVEVKNISSHKGVERALLYEIMRQKNVIRRGGKITQETRHFDEGRGVTISMRTKEEAEDYRYFREPDLMPMRVTGWIPAIKETLPELPDAKRARFMEQYGITDMHARALTSKIMLADFYEGVCAKGVDPKVAATWTADVLLGELNYRDLAISSYDGRTIGFIHAKDPEVENSFKVSDMVELVTLFAEGKVSDRAAVEVIRTILDGNEEKSPSQIIEEKGLFKAEDDLVTRAVAETIAENEAAVQDYLGGTEKSLNFLVGQVMKKTKGTADAKTARELIVKELKG.

It belongs to the GatB/GatE family. GatB subfamily. In terms of assembly, heterotrimer of A, B and C subunits.

It catalyses the reaction L-glutamyl-tRNA(Gln) + L-glutamine + ATP + H2O = L-glutaminyl-tRNA(Gln) + L-glutamate + ADP + phosphate + H(+). The catalysed reaction is L-aspartyl-tRNA(Asn) + L-glutamine + ATP + H2O = L-asparaginyl-tRNA(Asn) + L-glutamate + ADP + phosphate + 2 H(+). Its function is as follows. Allows the formation of correctly charged Asn-tRNA(Asn) or Gln-tRNA(Gln) through the transamidation of misacylated Asp-tRNA(Asn) or Glu-tRNA(Gln) in organisms which lack either or both of asparaginyl-tRNA or glutaminyl-tRNA synthetases. The reaction takes place in the presence of glutamine and ATP through an activated phospho-Asp-tRNA(Asn) or phospho-Glu-tRNA(Gln). The protein is Aspartyl/glutamyl-tRNA(Asn/Gln) amidotransferase subunit B of Methanosarcina mazei (strain ATCC BAA-159 / DSM 3647 / Goe1 / Go1 / JCM 11833 / OCM 88) (Methanosarcina frisia).